Here is a 58-residue protein sequence, read N- to C-terminus: Large ribosomal subunit protein bL32 (58 aa).

Positions 1-19 (MAVPKKRTSKSKKNMRKAN) are enriched in basic residues. Residues 1-58 (MAVPKKRTSKSKKNMRKANWKNQAKLAAKKALSLGKSVETQRSHSFVHPRYEEEEEED) form a disordered region. The segment covering 20–32 (WKNQAKLAAKKAL) has biased composition (low complexity).

The protein belongs to the bacterial ribosomal protein bL32 family.

The protein is Large ribosomal subunit protein bL32 of Trichodesmium erythraeum (strain IMS101).